A 207-amino-acid chain; its full sequence is Ribosomal RNA large subunit methyltransferase E (207 aa).

Glycine 60, tryptophan 62, aspartate 80, aspartate 96, and aspartate 121 together coordinate S-adenosyl-L-methionine. Lysine 161 functions as the Proton acceptor in the catalytic mechanism.

It belongs to the class I-like SAM-binding methyltransferase superfamily. RNA methyltransferase RlmE family.

Its subcellular location is the cytoplasm. It carries out the reaction uridine(2552) in 23S rRNA + S-adenosyl-L-methionine = 2'-O-methyluridine(2552) in 23S rRNA + S-adenosyl-L-homocysteine + H(+). Its function is as follows. Specifically methylates the uridine in position 2552 of 23S rRNA at the 2'-O position of the ribose in the fully assembled 50S ribosomal subunit. The protein is Ribosomal RNA large subunit methyltransferase E of Methylobacillus flagellatus (strain ATCC 51484 / DSM 6875 / VKM B-1610 / KT).